The primary structure comprises 125 residues: Small ribosomal subunit protein uS13 (125 aa).

Residues 93-125 form a disordered region; the sequence is RRGLPVRGQRTKTNARTRKGPKRTVAGKKKAGR.

The protein belongs to the universal ribosomal protein uS13 family. In terms of assembly, part of the 30S ribosomal subunit. Forms a loose heterodimer with protein S19. Forms two bridges to the 50S subunit in the 70S ribosome.

In terms of biological role, located at the top of the head of the 30S subunit, it contacts several helices of the 16S rRNA. In the 70S ribosome it contacts the 23S rRNA (bridge B1a) and protein L5 of the 50S subunit (bridge B1b), connecting the 2 subunits; these bridges are implicated in subunit movement. Contacts the tRNAs in the A and P-sites. The chain is Small ribosomal subunit protein uS13 from Renibacterium salmoninarum (strain ATCC 33209 / DSM 20767 / JCM 11484 / NBRC 15589 / NCIMB 2235).